We begin with the raw amino-acid sequence, 350 residues long: Kievitone hydratase (350 aa).

A signal peptide spans 1 to 19 (MMISSVLVAGVVAVSAALA).

As to quaternary structure, homodimer. Post-translationally, glycosylated.

It localises to the secreted. It carries out the reaction kievitone hydrate = kievitone + H2O. Converts fungitoxic kievitone to the less toxic kievitone hydrate, and thereby protects the pathogenic fungus against this phytoalexin. This Fusarium solani subsp. phaseoli (Nectria haematococca) protein is Kievitone hydratase (khs).